Here is a 1012-residue protein sequence, read N- to C-terminus: Probable inorganic carbon transporter subunit DabA (1012 aa).

Zn(2+)-binding residues include cysteine 489, aspartate 491, histidine 679, and cysteine 694.

This sequence belongs to the inorganic carbon transporter (TC 9.A.2) DabA family. As to quaternary structure, forms a complex with DabB. Zn(2+) serves as cofactor.

It is found in the cell inner membrane. Its function is as follows. Part of an energy-coupled inorganic carbon pump. The polypeptide is Probable inorganic carbon transporter subunit DabA (Dechloromonas aromatica (strain RCB)).